The following is an 808-amino-acid chain: Piwi-like protein 1 (808 aa).

The region spanning 214-333 is the PAZ domain; it reads RINRVLNENN…IPGELCYLCG (120 aa). Residues 300–322 are disordered; the sequence is SMVRPKEKTENEPEGPTETDQSL. Residues 492 to 790 enclose the Piwi domain; sequence HMALVFIPDD…LAELVGKIHR (299 aa).

It belongs to the argonaute family. Piwi subfamily. In terms of tissue distribution, expressed in dividing adult somatic stem cells (neoblasts).

The chain is Piwi-like protein 1 (wi-1) from Schmidtea mediterranea (Freshwater planarian flatworm).